Consider the following 450-residue polypeptide: Sulfide:quinone oxidoreductase, mitochondrial (450 aa).

Residues 53–54 (AG), Glu75, Gln83, and Val118 each bind FAD. N6-acetyllysine occurs at positions 134 and 173. Cys201 serves as the catalytic Cysteine persulfide intermediate. A disulfide bridge links Cys201 with Cys379. Residue Asp336 coordinates FAD. Ser343 is modified (phosphoserine). 344-347 (KTAA) contributes to the FAD binding site. The Cysteine persulfide intermediate role is filled by Cys379.

Belongs to the SQRD family. FAD is required as a cofactor.

It localises to the mitochondrion. It catalyses the reaction ubiquinone-10 + hydrogen sulfide + sulfite + 2 H(+) = ubiquinol-10 + thiosulfate. It carries out the reaction a quinone + hydrogen sulfide + glutathione + H(+) = S-sulfanylglutathione + a quinol. The catalysed reaction is ubiquinone-10 + hydrogen sulfide + glutathione + H(+) = S-sulfanylglutathione + ubiquinol-10. Catalyzes the oxidation of hydrogen sulfide with the help of a quinone, such as ubiquinone-10, giving rise to thiosulfate and ultimately to sulfane (molecular sulfur) atoms. Requires an additional electron acceptor; can use sulfite, sulfide or cyanide (in vitro). It is believed the in vivo electron acceptor is glutathione. In Mus musculus (Mouse), this protein is Sulfide:quinone oxidoreductase, mitochondrial.